Reading from the N-terminus, the 938-residue chain is AP-2 complex subunit alpha-2 (938 aa).

A 1,2-diacyl-sn-glycero-3-phospho-(1D-myo-inositol-3,4,5-trisphosphate)-binding positions include 11-12 (RG), Lys43, Tyr53, and 57-61 (KYVCK). The interval 616 to 677 (LKKKKGPSTV…APPVPAGPPP (62 aa)) is disordered. The span at 645–668 (PALASTSAVSTPSPSADLLGLGAA) shows a compositional bias: low complexity.

This sequence belongs to the adaptor complexes large subunit family. As to quaternary structure, adaptor protein complex 2 (AP-2) is a heterotetramer composed of two large adaptins (alpha-type subunit AP2A1 or AP2A2 and beta-type subunit AP2B1), a medium adaptin (mu-type subunit AP2M1) and a small adaptin (sigma-type subunit AP2S1). Binds clathrin. Binds EPN1, EPS15, AMPH, SNAP91 and BIN1. Interacts with HIP1. Interacts with DGKD. Interacts with DENND1A, DENND1B and DENND1C. Interacts with FCHO1. Interacts with ATAT1; this interaction is required for efficient alpha-tubulin acetylation by ATAT1. Interacts with KIAA1107. Together with AP2B1 and AP2M1, it interacts with ADAM10; this interaction facilitates ADAM10 endocytosis from the plasma membrane during long-term potentiation in hippocampal neurons. Interacts with CLN3 (via dileucine motif). Interacts with ABCB11; this interaction regulates cell membrane expression of ABCB11 through its internalization in a clathrin-dependent manner and its subsequent degradation. Interacts with DNAJC6.

It localises to the cell membrane. The protein resides in the membrane. The protein localises to the coated pit. In terms of biological role, component of the adaptor protein complex 2 (AP-2). Adaptor protein complexes function in protein transport via transport vesicles in different membrane traffic pathways. Adaptor protein complexes are vesicle coat components and appear to be involved in cargo selection and vesicle formation. AP-2 is involved in clathrin-dependent endocytosis in which cargo proteins are incorporated into vesicles surrounded by clathrin (clathrin-coated vesicles, CCVs) which are destined for fusion with the early endosome. The clathrin lattice serves as a mechanical scaffold but is itself unable to bind directly to membrane components. Clathrin-associated adaptor protein (AP) complexes which can bind directly to both the clathrin lattice and to the lipid and protein components of membranes are considered to be the major clathrin adaptors contributing the CCV formation. AP-2 also serves as a cargo receptor to selectively sort the membrane proteins involved in receptor-mediated endocytosis. AP-2 seems to play a role in the recycling of synaptic vesicle membranes from the presynaptic surface. AP-2 recognizes Y-X-X-[FILMV] (Y-X-X-Phi) and [ED]-X-X-X-L-[LI] endocytosis signal motifs within the cytosolic tails of transmembrane cargo molecules. AP-2 may also play a role in maintaining normal post-endocytic trafficking through the ARF6-regulated, non-clathrin pathway. During long-term potentiation in hippocampal neurons, AP-2 is responsible for the endocytosis of ADAM10. The AP-2 alpha subunit binds polyphosphoinositide-containing lipids, positioning AP-2 on the membrane. The AP-2 alpha subunit acts via its C-terminal appendage domain as a scaffolding platform for endocytic accessory proteins. The AP-2 alpha and AP-2 sigma subunits are thought to contribute to the recognition of the [ED]-X-X-X-L-[LI] motif. This Bos taurus (Bovine) protein is AP-2 complex subunit alpha-2.